A 240-amino-acid polypeptide reads, in one-letter code: Insulin-like growth factor-binding protein 3 receptor (240 aa).

Positions 1-38 (MGSCQAGHNLHLCLAHHPPLVCATLILLLLGLSGLGLG) are cleaved as a signal peptide. At 39 to 204 (GFLLTHTTGL…SEELALCGSR (166 aa)) the chain is on the extracellular side. An N-linked (GlcNAc...) asparagine glycan is attached at asparagine 167. A helical transmembrane segment spans residues 205–225 (VLGLGFFLVLLCGLLCCTTAV). Residues 226-240 (CFHPRPEFHWSRTRL) are Cytoplasmic-facing.

As to quaternary structure, interacts with IGFBP3. Interacts with CASP8.

Its subcellular location is the cell membrane. Functionally, cell death receptor specific for IGFBP3, may mediate caspase-8-dependent apoptosis upon ligand binding. The chain is Insulin-like growth factor-binding protein 3 receptor (Tmem219) from Mus musculus (Mouse).